The sequence spans 763 residues: 5-methyltetrahydropteroyltriglutamate--homocysteine methyltransferase (763 aa).

5-methyltetrahydropteroyltri-L-glutamate contacts are provided by residues R16 to K19 and K117. L-homocysteine-binding positions include I438–S440 and E491. L-methionine contacts are provided by residues I438–S440 and E491. 5-methyltetrahydropteroyltri-L-glutamate is bound by residues R522–C523 and W568. D606 is an L-homocysteine binding site. Position 606 (D606) interacts with L-methionine. Residue E612 coordinates 5-methyltetrahydropteroyltri-L-glutamate. Zn(2+)-binding residues include H648, C650, and E672. Catalysis depends on H701, which acts as the Proton donor. C733 provides a ligand contact to Zn(2+).

The protein belongs to the vitamin-B12 independent methionine synthase family. Zn(2+) is required as a cofactor.

It carries out the reaction 5-methyltetrahydropteroyltri-L-glutamate + L-homocysteine = tetrahydropteroyltri-L-glutamate + L-methionine. It participates in amino-acid biosynthesis; L-methionine biosynthesis via de novo pathway; L-methionine from L-homocysteine (MetE route): step 1/1. Its function is as follows. Catalyzes the transfer of a methyl group from 5-methyltetrahydrofolate to homocysteine resulting in methionine formation. The protein is 5-methyltetrahydropteroyltriglutamate--homocysteine methyltransferase of Pseudomonas paraeruginosa (strain DSM 24068 / PA7) (Pseudomonas aeruginosa (strain PA7)).